A 159-amino-acid chain; its full sequence is 2-C-methyl-D-erythritol 2,4-cyclodiphosphate synthase (159 aa).

Asp-8 and His-10 together coordinate a divalent metal cation. Residues Asp-8–His-10 and His-34–Ser-35 contribute to the 4-CDP-2-C-methyl-D-erythritol 2-phosphate site. An a divalent metal cation-binding site is contributed by His-42. 4-CDP-2-C-methyl-D-erythritol 2-phosphate is bound by residues Asp-56–Gly-58, Phe-61–Asp-65, Ala-100–Leu-106, Thr-132–Glu-135, Phe-139, and Arg-142.

It belongs to the IspF family. As to quaternary structure, homotrimer. The cofactor is a divalent metal cation.

It carries out the reaction 4-CDP-2-C-methyl-D-erythritol 2-phosphate = 2-C-methyl-D-erythritol 2,4-cyclic diphosphate + CMP. It participates in isoprenoid biosynthesis; isopentenyl diphosphate biosynthesis via DXP pathway; isopentenyl diphosphate from 1-deoxy-D-xylulose 5-phosphate: step 4/6. Involved in the biosynthesis of isopentenyl diphosphate (IPP) and dimethylallyl diphosphate (DMAPP), two major building blocks of isoprenoid compounds. Catalyzes the conversion of 4-diphosphocytidyl-2-C-methyl-D-erythritol 2-phosphate (CDP-ME2P) to 2-C-methyl-D-erythritol 2,4-cyclodiphosphate (ME-CPP) with a corresponding release of cytidine 5-monophosphate (CMP). This chain is 2-C-methyl-D-erythritol 2,4-cyclodiphosphate synthase, found in Escherichia coli O81 (strain ED1a).